Here is a 97-residue protein sequence, read N- to C-terminus: MSIRPLHDRVIVKRKEVETKSAGGIVLTGSAAAKSTRGEIIAVGKGRILENGTVQPLDVKVGDIVIFNDGYGVKSEKIDNEEVLIMSESDILAIVEA.

It belongs to the GroES chaperonin family. Heptamer of 7 subunits arranged in a ring. Interacts with the chaperonin GroEL.

The protein localises to the cytoplasm. Its function is as follows. Together with the chaperonin GroEL, plays an essential role in assisting protein folding. The GroEL-GroES system forms a nano-cage that allows encapsulation of the non-native substrate proteins and provides a physical environment optimized to promote and accelerate protein folding. GroES binds to the apical surface of the GroEL ring, thereby capping the opening of the GroEL channel. In Klebsiella pneumoniae (strain 342), this protein is Co-chaperonin GroES.